A 1255-amino-acid chain; its full sequence is Pre-mRNA-splicing factor ATP-dependent RNA helicase DEAH7 (1255 aa).

Residues 1–316 (MGVDPFKTTE…SDEDRSQGAE (316 aa)) form a disordered region. The segment covering 13–60 (EADKETNGGVPVKDKLTFKAPERKSRLGLDARAIEKKDNAKTEGEFKV) has biased composition (basic and acidic residues). Positions 109–137 (AQESTVTTENAGTSDISITPRTLSCTSSY) are enriched in polar residues. 2 short sequence motifs (nuclear localization signal) span residues 144–153 (RHREEHRRDR) and 172–191 (RRRE…KRRR). Residues 144 to 219 (RHREEHRRDR…EWERSPHGDR (76 aa)) show a composition bias toward basic and acidic residues. Low complexity-rich tracts occupy residues 220 to 240 (GSSY…AASP) and 271 to 290 (PIRA…GGRS). Positions 297–316 (REGDLTNEGHSDEDRSQGAE) are enriched in basic and acidic residues. The Helicase ATP-binding domain occupies 568 to 731 (LQVIRENQVI…FGSVPIFNIP (164 aa)). An ATP-binding site is contributed by 581-588 (GETGSGKT). Positions 678–681 (DEAH) match the DEAH box motif. In terms of domain architecture, Helicase C-terminal spans 753 to 933 (AVKQAMTIHI…NVVLLLKSLK (181 aa)). Residues 1190–1224 (LEHKKKQKEEKSGMEEEMEKLRRDQVESELRSKER) are compositionally biased toward basic and acidic residues. The interval 1190–1255 (LEHKKKQKEE…TFLRPKKLGL (66 aa)) is disordered.

Belongs to the DEAD box helicase family. DEAH subfamily. PRP16 sub-subfamily. In terms of assembly, interacts with the Phytophthora PSR1 protein.

The protein localises to the nucleus. It carries out the reaction ATP + H2O = ADP + phosphate + H(+). Involved in pre-mRNA splicing by mediating structural transitions of the spliceosome during the catalytic step. Facilitates expression of genes involved in auxin-mediated development including male-gametophyte transmission, apical-basal patterning of embryonic and gynoecium development, stamen development, phyllotactic flower positioning, and vascular development. Also involved in root-meristem maintenance and planar polarity of root-hair positioning. Acts as a component of RNA silencing that regulates distinct classes of endogenous small RNAs. Functions as a positive regulator of plant immunity. In Arabidopsis thaliana (Mouse-ear cress), this protein is Pre-mRNA-splicing factor ATP-dependent RNA helicase DEAH7.